Reading from the N-terminus, the 258-residue chain is Large ribosomal subunit protein bL21 (258 aa).

Positions 140 to 159 (KAKDAKDEAPKAAPKAEKKK) are enriched in basic and acidic residues. Residues 140–181 (KAKDAKDEAPKAAPKAEKKKAAPKKAKAEAAPAAADEGTRPA) are disordered.

Belongs to the bacterial ribosomal protein bL21 family. As to quaternary structure, part of the 50S ribosomal subunit. Contacts protein L20.

In terms of biological role, this protein binds to 23S rRNA in the presence of protein L20. The chain is Large ribosomal subunit protein bL21 from Jannaschia sp. (strain CCS1).